Here is a 223-residue protein sequence, read N- to C-terminus: Deoxyribose-phosphate aldolase (223 aa).

Asp91 functions as the Proton donor/acceptor in the catalytic mechanism. The active-site Schiff-base intermediate with acetaldehyde is the Lys154. The active-site Proton donor/acceptor is the Lys183.

It belongs to the DeoC/FbaB aldolase family. DeoC type 1 subfamily.

The protein localises to the cytoplasm. The catalysed reaction is 2-deoxy-D-ribose 5-phosphate = D-glyceraldehyde 3-phosphate + acetaldehyde. It participates in carbohydrate degradation; 2-deoxy-D-ribose 1-phosphate degradation; D-glyceraldehyde 3-phosphate and acetaldehyde from 2-deoxy-alpha-D-ribose 1-phosphate: step 2/2. Its function is as follows. Catalyzes a reversible aldol reaction between acetaldehyde and D-glyceraldehyde 3-phosphate to generate 2-deoxy-D-ribose 5-phosphate. This is Deoxyribose-phosphate aldolase from Geobacillus sp. (strain WCH70).